The sequence spans 183 residues: Ribosome-recycling factor (183 aa).

It belongs to the RRF family.

It localises to the cytoplasm. In terms of biological role, responsible for the release of ribosomes from messenger RNA at the termination of protein biosynthesis. May increase the efficiency of translation by recycling ribosomes from one round of translation to another. This chain is Ribosome-recycling factor, found in Mycoplasma genitalium (strain ATCC 33530 / DSM 19775 / NCTC 10195 / G37) (Mycoplasmoides genitalium).